A 236-amino-acid polypeptide reads, in one-letter code: LHFPL tetraspan subfamily member 3 protein (236 aa).

A run of 4 helical transmembrane segments spans residues 36–56, 110–130, 140–160, and 191–211; these read IGVLWAIFTICFAIVNVVCFI, FFIGLSMMLIIACIICFTLFF, ICAWMQLTSAACLVLGCMIFP, and ILAIIGILDALILSFLAFVLG.

Belongs to the LHFP family.

The protein localises to the membrane. The protein is LHFPL tetraspan subfamily member 3 protein of Homo sapiens (Human).